A 285-amino-acid polypeptide reads, in one-letter code: Ribosomal RNA small subunit methyltransferase A (285 aa).

Asn-21, Leu-23, Gly-48, Glu-69, Asp-94, and Asn-127 together coordinate S-adenosyl-L-methionine.

The protein belongs to the class I-like SAM-binding methyltransferase superfamily. rRNA adenine N(6)-methyltransferase family. RsmA subfamily.

The protein localises to the cytoplasm. The catalysed reaction is adenosine(1518)/adenosine(1519) in 16S rRNA + 4 S-adenosyl-L-methionine = N(6)-dimethyladenosine(1518)/N(6)-dimethyladenosine(1519) in 16S rRNA + 4 S-adenosyl-L-homocysteine + 4 H(+). Specifically dimethylates two adjacent adenosines (A1518 and A1519) in the loop of a conserved hairpin near the 3'-end of 16S rRNA in the 30S particle. May play a critical role in biogenesis of 30S subunits. The chain is Ribosomal RNA small subunit methyltransferase A from Koribacter versatilis (strain Ellin345).